A 232-amino-acid polypeptide reads, in one-letter code: Mediator of RNA polymerase II transcription subunit 18 (232 aa).

This sequence belongs to the Mediator complex subunit 18 family. As to quaternary structure, component of the Mediator complex.

It localises to the nucleus. Component of the Mediator complex, a coactivator involved in the regulated transcription of nearly all RNA polymerase II-dependent genes. Mediator functions as a bridge to convey information from gene-specific regulatory proteins to the basal RNA polymerase II transcription machinery. Mediator is recruited to promoters by direct interactions with regulatory proteins and serves as a scaffold for the assembly of a functional preinitiation complex with RNA polymerase II and the general transcription factors. The protein is Mediator of RNA polymerase II transcription subunit 18 (mdt-18) of Caenorhabditis elegans.